A 974-amino-acid polypeptide reads, in one-letter code: Protein bicaudal C homolog 1 (974 aa).

The interval 1 to 50 is disordered; sequence MAAQGEPGYLAAQSDPGSNSERSTDSPVPGSEDDLVAGATLHSPEWSEER. Residues serine 26, serine 31, and serine 43 each carry the phosphoserine modification. 2 consecutive KH domains span residues 132–199 and 284–348; these read RVTL…RVRI and PVST…RQYL. Lysine 398 is subject to N6-acetyllysine. Serine 576, serine 612, and serine 679 each carry phosphoserine. 3 disordered regions span residues 593 to 644, 665 to 719, and 783 to 846; these read VLSA…GDLK, GTKN…HLAP, and YKPT…KSTE. A compositionally biased stretch (polar residues) spans 602-619; the sequence is SIQTSGSEQTSPKSSPTE. Basic and acidic residues predominate over residues 690–703; the sequence is LADKKAPGSERAAE. One can recognise an SAM domain in the interval 873-936; that stretch reads FKGSDLPELF…LLAISELNKN (64 aa).

It belongs to the BicC family. As to quaternary structure, interacts (via KH domains) with ANKS6 (via SAM domain) in an RNA-dependent manner. Interacts with ANKS3.

It localises to the cytoplasm. Putative RNA-binding protein. Acts as a negative regulator of Wnt signaling. May be involved in regulating gene expression during embryonic development. The sequence is that of Protein bicaudal C homolog 1 (BICC1) from Homo sapiens (Human).